The chain runs to 110 residues: U1-lycotoxin-Ls1cc (110 aa).

The N-terminal stretch at 1–20 is a signal peptide; the sequence is MKFVLLFGVLLVTLFSYSSA. Positions 21-44 are excised as a propeptide; that stretch reads EMLDDFDQADEDELLSLIEKEEAR. Intrachain disulfides connect cysteine 47–cysteine 62, cysteine 54–cysteine 71, cysteine 61–cysteine 89, and cysteine 73–cysteine 87.

Belongs to the neurotoxin 19 (CSTX) family. 03 subfamily. Expressed by the venom gland.

It is found in the secreted. In Lycosa singoriensis (Wolf spider), this protein is U1-lycotoxin-Ls1cc.